A 544-amino-acid chain; its full sequence is Chaperonin GroEL (544 aa).

ATP is bound by residues 29–32 (TLGP), 86–90 (DGTTT), G413, 476–478 (NAA), and D492.

Belongs to the chaperonin (HSP60) family. As to quaternary structure, forms a cylinder of 14 subunits composed of two heptameric rings stacked back-to-back. Interacts with the co-chaperonin GroES.

It is found in the cytoplasm. It catalyses the reaction ATP + H2O + a folded polypeptide = ADP + phosphate + an unfolded polypeptide.. Together with its co-chaperonin GroES, plays an essential role in assisting protein folding. The GroEL-GroES system forms a nano-cage that allows encapsulation of the non-native substrate proteins and provides a physical environment optimized to promote and accelerate protein folding. The sequence is that of Chaperonin GroEL from Bacillus mycoides (strain KBAB4) (Bacillus weihenstephanensis).